The chain runs to 291 residues: MATPREDHLKKGATASVYHTLVAGSVSGAVARAVTAPLDTVKIRLQLSNKSLGAHDGLRQTVVRIFKNEGIRAFWKGNVPAEIMYILYGATQFTSYSMFSKALTELETTYGFNLRPSNHSLIVGTSAGLTSLIVTYPFDLLRTRLAANSERHFLSMTAVIKQVRASGGLAGLYMGAKPTLLSLGLNSGLMFWTYEIAREVSAQYKDNIPFIEGFCGFFAGASSKGITFPLDTLRKRMQMRSSKTSIIGLARTILRREGLFGFYKGFGISLIKTAPTSAVSLFVYEVVLNGM.

Helical transmembrane passes span 12-31 (GATASVYHTLVAGSVSGAVA), 83-99 (IMYILYGATQFTSYSMF), 120-141 (SLIVGTSAGLTSLIVTYPFDLL), 167-191 (GGLAGLYMGAKPTLLSLGLNSGLMF), 214-230 (FCGFFAGASSKGITFPL), and 265-282 (GFGISLIKTAPTSAVSLF). Solcar repeat units follow at residues 15-102 (ASVY…FSKA), 115-200 (RPSN…AREV), and 207-290 (NIPF…VLNG).

It belongs to the mitochondrial carrier (TC 2.A.29) family.

Its subcellular location is the mitochondrion inner membrane. Mitochondrial transporter that mediates uptake of thiamine pyrophosphate (ThPP) into mitochondria. The chain is Mitochondrial thiamine pyrophosphate carrier 1 (TPC1) from Meyerozyma guilliermondii (strain ATCC 6260 / CBS 566 / DSM 6381 / JCM 1539 / NBRC 10279 / NRRL Y-324) (Yeast).